A 510-amino-acid chain; its full sequence is Probable lipid II flippase MurJ (510 aa).

The next 12 membrane-spanning stretches (helical) occupy residues 13-33 (DVVI…LFAN), 81-101 (GLVS…AALF), 130-150 (FPYL…NTIG), 154-174 (VMSF…LFLA), 182-202 (LALA…QIPF), 240-260 (INLL…ISWL), 266-286 (LLEF…LPTL), 315-335 (IFLL…PMLL), 357-377 (AFNA…GYYA), 396-416 (MGFN…ASAM), 443-463 (VFFV…WYYV), and 481-501 (LVWL…LLGV).

Belongs to the MurJ/MviN family.

It is found in the cell inner membrane. Its pathway is cell wall biogenesis; peptidoglycan biosynthesis. Functionally, involved in peptidoglycan biosynthesis. Transports lipid-linked peptidoglycan precursors from the inner to the outer leaflet of the cytoplasmic membrane. In Haemophilus influenzae (strain ATCC 51907 / DSM 11121 / KW20 / Rd), this protein is Probable lipid II flippase MurJ.